The chain runs to 208 residues: Ribosomal RNA large subunit methyltransferase E (208 aa).

The S-adenosyl-L-methionine site is built by G63, W65, D83, D99, and D124. The Proton acceptor role is filled by K164.

This sequence belongs to the class I-like SAM-binding methyltransferase superfamily. RNA methyltransferase RlmE family.

Its subcellular location is the cytoplasm. It carries out the reaction uridine(2552) in 23S rRNA + S-adenosyl-L-methionine = 2'-O-methyluridine(2552) in 23S rRNA + S-adenosyl-L-homocysteine + H(+). Its function is as follows. Specifically methylates the uridine in position 2552 of 23S rRNA at the 2'-O position of the ribose in the fully assembled 50S ribosomal subunit. The chain is Ribosomal RNA large subunit methyltransferase E from Enterobacter sp. (strain 638).